Here is a 317-residue protein sequence, read N- to C-terminus: Nitrilase (317 aa).

The 276-residue stretch at 5-280 folds into the CN hydrolase domain; sequence VKVAVVQAEP…DGVIISELDM (276 aa). Glu-45 serves as the catalytic Proton acceptor. Residue Lys-125 is part of the active site. Residue Cys-165 is the Nucleophile of the active site.

The protein belongs to the carbon-nitrogen hydrolase superfamily. Nitrilase family.

The catalysed reaction is a nitrile + 2 H2O = a carboxylate + NH4(+). In terms of biological role, nitrilase that hydrolyzes preferentially 4-cyanopyridine. Is also able to hydrolyze some aliphatic nitriles, such as phenylacetonitrile. In Meyerozyma guilliermondii (strain ATCC 6260 / CBS 566 / DSM 6381 / JCM 1539 / NBRC 10279 / NRRL Y-324) (Yeast), this protein is Nitrilase.